A 649-amino-acid chain; its full sequence is Acetyl-coenzyme A synthetase (649 aa).

CoA is bound by residues 189-192, threonine 311, and asparagine 335; that span reads RGGK. ATP is bound by residues 387–389, 411–416, aspartate 500, and arginine 515; these read GEP and DTWWQT. Serine 523 serves as a coordination point for CoA. Residue arginine 526 coordinates ATP. Mg(2+)-binding residues include valine 537, histidine 539, and valine 542. Arginine 584 contributes to the CoA binding site. An N6-acetyllysine modification is found at lysine 609.

It belongs to the ATP-dependent AMP-binding enzyme family. Requires Mg(2+) as cofactor. In terms of processing, acetylated. Deacetylation by the SIR2-homolog deacetylase activates the enzyme.

The enzyme catalyses acetate + ATP + CoA = acetyl-CoA + AMP + diphosphate. In terms of biological role, catalyzes the conversion of acetate into acetyl-CoA (AcCoA), an essential intermediate at the junction of anabolic and catabolic pathways. AcsA undergoes a two-step reaction. In the first half reaction, AcsA combines acetate with ATP to form acetyl-adenylate (AcAMP) intermediate. In the second half reaction, it can then transfer the acetyl group from AcAMP to the sulfhydryl group of CoA, forming the product AcCoA. The sequence is that of Acetyl-coenzyme A synthetase from Sinorhizobium medicae (strain WSM419) (Ensifer medicae).